We begin with the raw amino-acid sequence, 132 residues long: Small ribosomal subunit protein uS8 (132 aa).

This sequence belongs to the universal ribosomal protein uS8 family. In terms of assembly, part of the 30S ribosomal subunit. Contacts proteins S5 and S12.

One of the primary rRNA binding proteins, it binds directly to 16S rRNA central domain where it helps coordinate assembly of the platform of the 30S subunit. The chain is Small ribosomal subunit protein uS8 from Corynebacterium diphtheriae (strain ATCC 700971 / NCTC 13129 / Biotype gravis).